We begin with the raw amino-acid sequence, 703 residues long: Neoverrucotoxin subunit alpha (703 aa).

An N-acetylserine modification is found at Ser2. The B30.2/SPRY domain maps to 508-703; the sequence is PRMPFVQGYK…RFDHGTVRLL (196 aa).

It belongs to the SNTX/VTX toxin family. Heterodimer of alpha and beta subunits. Not glycosylated. In terms of processing, four intrachain disulfide linkages are present in the heterodimer. No interchain disulfide bound links the two subunits. Expressed by the venom gland.

The protein localises to the secreted. Its function is as follows. Has hemolytic and lethal activities. Its hemolytic activity is inhibited by anionic lipids, especially potently by cardiolipin. The chain is Neoverrucotoxin subunit alpha from Synanceia verrucosa (Reef stonefish).